We begin with the raw amino-acid sequence, 103 residues long: Small ribosomal subunit protein uS10 (103 aa).

This sequence belongs to the universal ribosomal protein uS10 family. Part of the 30S ribosomal subunit.

Functionally, involved in the binding of tRNA to the ribosomes. This is Small ribosomal subunit protein uS10 from Neisseria meningitidis serogroup C / serotype 2a (strain ATCC 700532 / DSM 15464 / FAM18).